Reading from the N-terminus, the 571-residue chain is uncharacterized protein (571 aa).

The disordered stretch occupies residues 1-25 (MAPSVATSLKAEILPSPRTSSPSSN). The FAD-binding FR-type domain occupies 135–389 (FSVFPAPILD…RGLHKNAFAT (255 aa)). Residues 447–479 (NPLQKSSDDDASSTVSQQTETEMDSFEVKKDGT) are disordered.

The protein belongs to the flavoprotein pyridine nucleotide cytochrome reductase family. FAD is required as a cofactor.

This is an uncharacterized protein from Schizosaccharomyces pombe (strain 972 / ATCC 24843) (Fission yeast).